The following is a 175-amino-acid chain: Snake venom metalloproteinase BpMP-1 (175 aa).

Residues 1–175 form the Peptidase M12B domain; that stretch reads YIELAVVADH…KHNPQCILNK (175 aa). Ca(2+) is bound by residues Glu3 and Asp74. 3 cysteine pairs are disulfide-bonded: Cys98-Cys171, Cys131-Cys155, and Cys133-Cys138. His117 provides a ligand contact to Zn(2+). Glu118 is a catalytic residue. Residues His121 and His127 each contribute to the Zn(2+) site. Positions 171 and 174 each coordinate Ca(2+).

This sequence belongs to the venom metalloproteinase (M12B) family. P-I subfamily. Monomer. It depends on Zn(2+) as a cofactor. As to expression, expressed by the venom gland.

Its subcellular location is the secreted. Inhibited by EDTA, 1,10-phenanthroline and beta-mercaptoethanol. Not inhibited by the serine protease inhibitors aprotinin and benzamidin. In terms of biological role, non-hemorrhagic snake venom zinc metalloprotease that hydrolyzes the Aalpha-chain of fibrinogen, more slowly the Bbeta-chain and shows no effect on the gamma chain. Has no coagulant activity on bovine plasma and fibrinogen. This Bothrops pauloensis (Neuwied's lancehead) protein is Snake venom metalloproteinase BpMP-1.